The chain runs to 786 residues: Endonuclease MutS2 (786 aa).

An ATP-binding site is contributed by 334–341 (GPNTGGKT). The region spanning 711–786 (LDLRGERYEN…GNGATVVYFK (76 aa)) is the Smr domain.

This sequence belongs to the DNA mismatch repair MutS family. MutS2 subfamily. As to quaternary structure, homodimer. Binds to stalled ribosomes, contacting rRNA.

Its function is as follows. Endonuclease that is involved in the suppression of homologous recombination and thus may have a key role in the control of bacterial genetic diversity. Functionally, acts as a ribosome collision sensor, splitting the ribosome into its 2 subunits. Detects stalled/collided 70S ribosomes which it binds and splits by an ATP-hydrolysis driven conformational change. Acts upstream of the ribosome quality control system (RQC), a ribosome-associated complex that mediates the extraction of incompletely synthesized nascent chains from stalled ribosomes and their subsequent degradation. Probably generates substrates for RQC. In Ligilactobacillus salivarius (strain UCC118) (Lactobacillus salivarius), this protein is Endonuclease MutS2.